The following is a 1298-amino-acid chain: Outer capsid protein VP1 (1298 aa).

The protein belongs to the aquareoviridae outer capsid VP1 protein family.

Its subcellular location is the virion. The catalysed reaction is a 5'-end diphospho-ribonucleoside in mRNA + GTP + H(+) = a 5'-end (5'-triphosphoguanosine)-ribonucleoside in mRNA + diphosphate. It catalyses the reaction a 5'-end (5'-triphosphoguanosine)-ribonucleoside in mRNA + S-adenosyl-L-methionine = a 5'-end (N(7)-methyl 5'-triphosphoguanosine)-ribonucleoside in mRNA + S-adenosyl-L-homocysteine. Functionally, outer capsid protein involved in mRNA capping. Catalyzes the last 3 enzymatic activities for formation of the 5' cap structure on the viral plus-strand transcripts, namely the RNA guanylyltransferase, RNA-7N- and RNA-2'O-methyltransferase activities. The chain is Outer capsid protein VP1 (S1) from Ctenopharyngodon idella (Grass carp).